A 349-amino-acid polypeptide reads, in one-letter code: UPF0324 inner membrane protein YeiH (349 aa).

At 1–12 (MTNITLQKQHRT) the chain is on the periplasmic side. The chain crosses the membrane as a helical span at residues 13–32 (LWHFIPGLALSAVITGVALW). At 33-35 (GGS) the chain is on the cytoplasmic side. The helical transmembrane segment at 36–58 (IPAVAGAGFSALTLAILLGMVLG) threads the bilayer. The Periplasmic portion of the chain corresponds to 59 to 99 (NTIYPHIWKSCDGGVLFAKQYLLRLGIILYGFRLTFSQIAD). Residues 100–122 (VGISGIIIDVLTLSSTFLLACFL) form a helical membrane-spanning segment. The Cytoplasmic segment spans residues 123–131 (GQKVFGLDK). Residues 132-151 (HTSWLIGAGSSICGAAAVLA) form a helical membrane-spanning segment. Residues 152-162 (TEPVVKAEASK) are Periplasmic-facing. A helical transmembrane segment spans residues 163-185 (VTVAVATVVIFGTVAIFLYPAIY). Residues 186–261 (PLMSQWFSPE…SGANSGEKSK (76 aa)) lie on the Cytoplasmic side of the membrane. The chain crosses the membrane as a helical span at residues 262-283 (ITIPWFAILFIVVAIFNSFHLL). Topologically, residues 284–289 (PQSVVN) are periplasmic. Residues 290 to 312 (MLVTLDTFLLAMAMAALGLTTHV) form a helical membrane-spanning segment. Residues 313–321 (SALKKAGAK) are Cytoplasmic-facing. Residues 322 to 344 (PLLMALVLFAWLIVGGGAINYVI) traverse the membrane as a helical segment. The Periplasmic portion of the chain corresponds to 345 to 349 (QSVIA).

The protein belongs to the UPF0324 family.

It is found in the cell inner membrane. This Escherichia coli O157:H7 protein is UPF0324 inner membrane protein YeiH (yeiH).